We begin with the raw amino-acid sequence, 508 residues long: Cytochrome c-552 (508 aa).

The first 23 residues, 1–23 (MNKSYKILLTGSVIAIGAMGLMA), serve as a signal peptide directing secretion. His-103 contributes to the heme c binding site. Cys-131, Cys-134, and Lys-135 together coordinate heme. Heme c is bound by residues Cys-169, Cys-172, His-173, Cys-211, Cys-214, and His-215. Ca(2+) contacts are provided by Glu-217, Tyr-218, Lys-274, and Gln-276. A substrate-binding site is contributed by Tyr-218. His-277 is a binding site for substrate. Positions 288, 295, 298, 299, 313, 326, 329, 330, and 405 each coordinate heme c. The tract at residues 485–508 (GRLDPKTLEGMSNKSSWSQTELSQ) is disordered. A compositionally biased stretch (polar residues) spans 494–508 (GMSNKSSWSQTELSQ).

It belongs to the cytochrome c-552 family. Ca(2+) serves as cofactor. The cofactor is heme c.

It is found in the periplasm. The enzyme catalyses 6 Fe(III)-[cytochrome c] + NH4(+) + 2 H2O = 6 Fe(II)-[cytochrome c] + nitrite + 8 H(+). It participates in nitrogen metabolism; nitrate reduction (assimilation). Its function is as follows. Catalyzes the reduction of nitrite to ammonia, consuming six electrons in the process. The sequence is that of Cytochrome c-552 from Desulfotalea psychrophila (strain LSv54 / DSM 12343).